A 563-amino-acid chain; its full sequence is BOS complex subunit NCLN (563 aa).

Residues 1–42 form the signal peptide; the sequence is MLEEAGEVLENMLKASCLPLGFIVFLPAVLLLVAPPLPAADA. At 43–522 the chain is on the lumenal side; that stretch reads AHEFTVYRMQ…VMNAYRVKPA (480 aa). 2 N-linked (GlcNAc...) asparagine glycosylation sites follow: Asn-241 and Asn-428. A helical transmembrane segment spans residues 523 to 543; it reads VFDLLLAVGIAAYLGMAYVAV. At 544–563 the chain is on the cytoplasmic side; sequence QHFSLLYKTVQRLLVKAKTQ.

This sequence belongs to the nicastrin family. As to quaternary structure, component of the back of Sec61 (BOS) complex, composed of NCLN/Nicalin, NOMO (NOMO1, NOMO2 or NOMO3) and TMEM147. The BOS complex is part of the multi-pass translocon (MPT) complex, composed of three subcomplexes, the GEL complex (composed of RAB5IF/OPTI and TMCO1), the BOS complex (composed of NCLN/Nicalin, NOMO and TMEM147) and the PAT complex (composed of WDR83OS/Asterix and CCDC47). The MPT complex associates with the SEC61 complex. In terms of tissue distribution, highly expressed in pancreas and skeletal muscle and, at lower levels, in heart.

The protein resides in the endoplasmic reticulum membrane. In terms of biological role, component of the multi-pass translocon (MPT) complex that mediates insertion of multi-pass membrane proteins into the lipid bilayer of membranes. The MPT complex takes over after the SEC61 complex: following membrane insertion of the first few transmembrane segments of proteins by the SEC61 complex, the MPT complex occludes the lateral gate of the SEC61 complex to promote insertion of subsequent transmembrane regions. May antagonize Nodal signaling and subsequent organization of axial structures during mesodermal patterning, via its interaction with NOMO. The protein is BOS complex subunit NCLN of Homo sapiens (Human).